Reading from the N-terminus, the 210-residue chain is Large ribosomal subunit protein uL3 (210 aa).

Positions 125–151 are disordered; the sequence is HGFGGGPRTHGQSDRLRAPGSIGAGTD.

It belongs to the universal ribosomal protein uL3 family. As to quaternary structure, part of the 50S ribosomal subunit. Forms a cluster with proteins L14 and L19.

Functionally, one of the primary rRNA binding proteins, it binds directly near the 3'-end of the 23S rRNA, where it nucleates assembly of the 50S subunit. The polypeptide is Large ribosomal subunit protein uL3 (Roseiflexus sp. (strain RS-1)).